Here is a 74-residue protein sequence, read N- to C-terminus: Lantibiotic lichenicidin A1 (74 aa).

A propeptide spanning residues 1–42 is cleaved from the precursor; sequence MSKKEMILSWKNPMYRTESSYHPAGNILKELQEEEQHSIAGG. Thr-43 carries the 2-oxobutanoic acid modification. The segment at residues 45–49 is a cross-link (beta-methyllanthionine (Thr-Cys)); sequence TLSTC. Ser-47 is modified (2,3-didehydroalanine (Ser)). A (Z)-2,3-didehydrobutyrine modification is found at Thr-48. The lanthionine (Ser-Cys) cross-link spans 53-63; that stretch reads SKPLGNNGYLC. Cross-links (beta-methyllanthionine (Thr-Cys)) lie at residues 64-69 and 66-73; these read TVTKEC and TKECMPSC.

In terms of processing, maturation of lantibiotics involves the enzymatic conversion of Thr, and Ser into dehydrated AA and the formation of thioether bonds with cysteine. This is followed by membrane translocation and cleavage of the modified precursor.

The protein localises to the secreted. Its subcellular location is the cell wall. In terms of biological role, lanthionine-containing peptide antibiotic (lantibiotic) active on Gram-positive bacteria. The bactericidal activity of lantibiotics is based on depolarization of energized bacterial cytoplasmic membranes, initiated by the formation of aqueous transmembrane pores. When present individually, LchA1 exhibits activity towards L.lactis HP. When combined with LchA2, it displays activity towards a broad spectrum of non-pathogenic and pathogenic Gram-positive bacteria including strains of L.monocytogenes, methicillin-resistant S.aureus, S.pneumoniae and strains of vancomycin-resistant enterococci, but not towards E.faecium L4001 and BM4147-1. Combined LchA1 and LchA2 peptides also inhibit Bacillus sp. HIL-Y85/54728, L.lactis DPC3417 and B.halodurans C-125, which produce lantibiotics themselves. Inactivated by proteinase K and pronase E, but not by trypsin and chymotrypsin. In Bacillus licheniformis (strain ATCC 14580 / DSM 13 / JCM 2505 / CCUG 7422 / NBRC 12200 / NCIMB 9375 / NCTC 10341 / NRRL NRS-1264 / Gibson 46), this protein is Lantibiotic lichenicidin A1.